The primary structure comprises 92 residues: Protein S100-B (92 aa).

At Ser2 the chain carries N-acetylserine. 2 consecutive EF-hand domains span residues 13–48 (DVFH…LEEI) and 49–84 (KEQE…VTTA). Residue His16 coordinates Zn(2+). 3 residues coordinate Ca(2+): Ser19, Glu22, and Asp24. His26 serves as a coordination point for Zn(2+). Positions 62, 64, 66, 68, and 73 each coordinate Ca(2+). His86 and His91 together coordinate Zn(2+).

The protein belongs to the S-100 family. As to quaternary structure, dimer of either two alpha chains, or two beta chains, or one alpha and one beta chain. The S100B dimer binds two molecules of STK38. Interacts with CACYBP in a calcium-dependent manner. Interacts with ATAD3A; this interaction probably occurs in the cytosol prior to ATAD3A mitochondrial targeting. Interacts with S100A6. The S100B dimer interacts with two molecules of CAPZA1. Interacts with AGER. Interacts with PPP5C (via TPR repeats); the interaction is calcium-dependent and modulates PPP5C activity. Interacts with TPPP; this interaction inhibits TPPP dimerization. Interacts with isoform CLSTN3beta of CLSTN3; interaction promotes secretion.

It localises to the cytoplasm. Its subcellular location is the nucleus. The protein localises to the secreted. Its function is as follows. Small zinc- and- and calcium-binding protein that is highly expressed in astrocytes and constitutes one of the most abundant soluble proteins in brain. Weakly binds calcium but binds zinc very tightly-distinct binding sites with different affinities exist for both ions on each monomer. Physiological concentrations of potassium ion antagonize the binding of both divalent cations, especially affecting high-affinity calcium-binding sites. Acts as a neurotrophic factor that promotes astrocytosis and axonal proliferation. Involved in innervation of thermogenic adipose tissue by acting as an adipocyte-derived neurotrophic factor that promotes sympathetic innervation of adipose tissue. Binds to and initiates the activation of STK38 by releasing autoinhibitory intramolecular interactions within the kinase. Interaction with AGER after myocardial infarction may play a role in myocyte apoptosis by activating ERK1/2 and p53/TP53 signaling. Could assist ATAD3A cytoplasmic processing, preventing aggregation and favoring mitochondrial localization. May mediate calcium-dependent regulation on many physiological processes by interacting with other proteins, such as TPR-containing proteins, and modulating their activity. This is Protein S100-B from Mus musculus (Mouse).